Reading from the N-terminus, the 434-residue chain is uncharacterized protein (434 aa).

The next 11 membrane-spanning stretches (helical) occupy residues 50–70, 72–92, 95–115, 135–155, 158–178, 179–199, 229–249, 288–308, 319–339, 376–396, and 412–432; these read GSIAFGLSIGFVASVGISFTL, TGLLNAWLLFLPTDILGVLAI, LMAFGLGAIWGVLILTCLLPV, SPVVSAFALFPLVAIFYQFGW, SLIAAVVVLMTRVVVVRYFPH, LNPESIEIFIGMVMLLGIAIT, LPYIAIVGALIAAVASMKIFA, GFVPLIATTALATGVYAVAGF, PNPMVAAVLGAVVISAEVLLL, IFAAIKMAGYTGFSIAVAIYF, and VVAVMITGILLNVLYWLGLFV.

Its subcellular location is the cell membrane. This is an uncharacterized protein from Escherichia coli (strain K12).